A 381-amino-acid chain; its full sequence is MEMYFKRMKDEWTGLVEQADPLIRAKAAEIALAHAHYLSIEFYRIVRIDPHAEEFLSNEQVERQLKSAMERWIINVLSAQVDDVERLIQIQHTVAEVHARIGIPVEIVEMGFRVLKKILYPVIFSSDYSAAEKLQVYHFSINSIDIAMEVMTRAFTFSDSSASKEDENYRIFSLLENAEEEKERQIASILSWEIDIIYKVLLDSDLGSSLPLSQADFGLWFNHKGRHYFSGIAEVGHISRLIQDFDGIFNQTMRNTRILNNRSLRVKFLLQIRNTVSQIITLLRELFEEVSRHEVGMDVLTKLLNRRFLPTIFKREIAHANRTGTPLSVLIIDVDKFKEINDTWGHNTGDEILRKVSFLSQKRLVKSKILGAGSSRKLAVS.

His-98 lines the heme pocket. The region spanning 325 to 381 is the GGDEF domain; sequence TPLSVLIIDVDKFKEINDTWGHNTGDEILRKVSFLSQKRLVKSKILGAGSSRKLAVS. A Mg(2+)-binding site is contributed by Asp-333. Substrate is bound by residues Asn-341 and Asp-350.

The cofactor is heme. Mg(2+) is required as a cofactor.

The enzyme catalyses 2 GTP = 3',3'-c-di-GMP + 2 diphosphate. Its pathway is purine metabolism; 3',5'-cyclic di-GMP biosynthesis. Its function is as follows. Globin-coupled heme-based oxygen sensor protein displaying diguanylate cyclase (DGC) activity in response to oxygen availability. Thus, catalyzes the synthesis of cyclic diguanylate (c-di-GMP) via the condensation of 2 GTP molecules. Cyclic-di-GMP is a second messenger which controls cell surface-associated traits in bacteria. The sequence is that of Diguanylate cyclase DosC (dosC) from Shigella flexneri.